We begin with the raw amino-acid sequence, 142 residues long: Nucleoside diphosphate kinase (142 aa).

K11, F59, R87, T93, R104, and N114 together coordinate ATP. H117 acts as the Pros-phosphohistidine intermediate in catalysis.

It belongs to the NDK family. In terms of assembly, homotetramer. It depends on Mg(2+) as a cofactor.

It is found in the cytoplasm. It carries out the reaction a 2'-deoxyribonucleoside 5'-diphosphate + ATP = a 2'-deoxyribonucleoside 5'-triphosphate + ADP. The catalysed reaction is a ribonucleoside 5'-diphosphate + ATP = a ribonucleoside 5'-triphosphate + ADP. In terms of biological role, major role in the synthesis of nucleoside triphosphates other than ATP. The ATP gamma phosphate is transferred to the NDP beta phosphate via a ping-pong mechanism, using a phosphorylated active-site intermediate. The chain is Nucleoside diphosphate kinase from Aeromonas salmonicida (strain A449).